Consider the following 618-residue polypeptide: Probable Xaa-Pro aminopeptidase P (618 aa).

Aspartate 414, aspartate 425, glutamate 523, and glutamate 537 together coordinate Mn(2+).

It belongs to the peptidase M24B family. Mn(2+) is required as a cofactor.

The enzyme catalyses Release of any N-terminal amino acid, including proline, that is linked to proline, even from a dipeptide or tripeptide.. Its function is as follows. Catalyzes the removal of a penultimate prolyl residue from the N-termini of peptides. This Metarhizium acridum (strain CQMa 102) protein is Probable Xaa-Pro aminopeptidase P (AMPP).